The chain runs to 370 residues: tRNA-specific 2-thiouridylase MnmA (370 aa).

ATP is bound by residues 19–26 (AMSGGVDS) and Leu-45. Catalysis depends on Cys-113, which acts as the Nucleophile. Cysteines 113 and 209 form a disulfide. Gly-137 provides a ligand contact to ATP. The segment at 159-161 (RDQ) is interaction with tRNA. Cys-209 acts as the Cysteine persulfide intermediate in catalysis.

It belongs to the MnmA/TRMU family.

It is found in the cytoplasm. It catalyses the reaction S-sulfanyl-L-cysteinyl-[protein] + uridine(34) in tRNA + AH2 + ATP = 2-thiouridine(34) in tRNA + L-cysteinyl-[protein] + A + AMP + diphosphate + H(+). Its function is as follows. Catalyzes the 2-thiolation of uridine at the wobble position (U34) of tRNA, leading to the formation of s(2)U34. The protein is tRNA-specific 2-thiouridylase MnmA of Zymomonas mobilis subsp. mobilis (strain ATCC 31821 / ZM4 / CP4).